Here is a 155-residue protein sequence, read N- to C-terminus: Small ribosomal subunit protein uS7c (155 aa).

Belongs to the universal ribosomal protein uS7 family. Part of the 30S ribosomal subunit.

The protein localises to the plastid. The protein resides in the chloroplast. One of the primary rRNA binding proteins, it binds directly to 16S rRNA where it nucleates assembly of the head domain of the 30S subunit. The protein is Small ribosomal subunit protein uS7c of Beta vulgaris (Sugar beet).